A 511-amino-acid polypeptide reads, in one-letter code: Xylose import ATP-binding protein XylG (511 aa).

2 ABC transporter domains span residues 6 to 244 and 261 to 506; these read LEMR…VGRE and FEAR…IGKP. 38–45 is a binding site for ATP; it reads GENGAGKS.

This sequence belongs to the ABC transporter superfamily. Xylose importer (TC 3.A.1.2.4) family. The complex is composed of two ATP-binding proteins (XylG), two transmembrane proteins (XylH) and a solute-binding protein (XylF).

Its subcellular location is the cell inner membrane. The enzyme catalyses D-xylose(out) + ATP + H2O = D-xylose(in) + ADP + phosphate + H(+). Its function is as follows. Part of the ABC transporter complex XylFGH involved in xylose import. Responsible for energy coupling to the transport system. This chain is Xylose import ATP-binding protein XylG, found in Brucella suis biovar 1 (strain 1330).